The following is a 422-amino-acid chain: Serine hydroxymethyltransferase (422 aa).

Residues L119 and 123–125 (GHL) contribute to the (6S)-5,6,7,8-tetrahydrofolate site. K228 is modified (N6-(pyridoxal phosphate)lysine). Residues E244 and 352–354 (SPF) each bind (6S)-5,6,7,8-tetrahydrofolate.

This sequence belongs to the SHMT family. Homodimer. Pyridoxal 5'-phosphate serves as cofactor.

The protein resides in the cytoplasm. It carries out the reaction (6R)-5,10-methylene-5,6,7,8-tetrahydrofolate + glycine + H2O = (6S)-5,6,7,8-tetrahydrofolate + L-serine. It participates in one-carbon metabolism; tetrahydrofolate interconversion. Its pathway is amino-acid biosynthesis; glycine biosynthesis; glycine from L-serine: step 1/1. Catalyzes the reversible interconversion of serine and glycine with tetrahydrofolate (THF) serving as the one-carbon carrier. This reaction serves as the major source of one-carbon groups required for the biosynthesis of purines, thymidylate, methionine, and other important biomolecules. Also exhibits THF-independent aldolase activity toward beta-hydroxyamino acids, producing glycine and aldehydes, via a retro-aldol mechanism. The polypeptide is Serine hydroxymethyltransferase (Magnetococcus marinus (strain ATCC BAA-1437 / JCM 17883 / MC-1)).